The primary structure comprises 463 residues: uncharacterized protein (463 aa).

Residues Ile13–His81 enclose the HTH gntR-type domain. The segment at residues Lys41–Glu60 is a DNA-binding region (H-T-H motif). An N6-(pyridoxal phosphate)lysine modification is found at Lys308.

This sequence in the C-terminal section; belongs to the class-I pyridoxal-phosphate-dependent aminotransferase family. It depends on pyridoxal 5'-phosphate as a cofactor.

This is an uncharacterized protein from Bacillus subtilis (strain 168).